A 180-amino-acid chain; its full sequence is Adenine phosphoribosyltransferase (180 aa).

It belongs to the purine/pyrimidine phosphoribosyltransferase family. In terms of assembly, homodimer.

Its subcellular location is the cytoplasm. The catalysed reaction is AMP + diphosphate = 5-phospho-alpha-D-ribose 1-diphosphate + adenine. It participates in purine metabolism; AMP biosynthesis via salvage pathway; AMP from adenine: step 1/1. Functionally, catalyzes a salvage reaction resulting in the formation of AMP, that is energically less costly than de novo synthesis. This is Adenine phosphoribosyltransferase from Haemophilus influenzae (strain PittEE).